Consider the following 656-residue polypeptide: MAEIQLTFPDGAQKTFEQATSLLDVAKSISTSLAKKAIAGKFNGEVVDLQQPLLEDGAIEIITKDDQAVNLTATWHTAAFVLAATLSQHYPEMQFGEVTATEDGFYYDTDNEAGQVAVTDLPEIKTEMAKLIQSGEAISRVSVSKDDAKKLFAGQTYKLALLDEVEADQVLVYQLGDYSDFSLAPMLGKVSDVKFFELLSVAGAYWQGKSSNQMLQRIYGTAYPKQEELDADLKRRQEAKERDHRVIGNQLDLFFVDPKVGAGLPYWLPNGATIRRSIERYIIDKEVANGYEHVYTPILANLDLYKQSGHWDHYREDMFPPMDMGDGEMLELRPMNCPSHIQVYKHHPRSYRELPIRIAELGMMHRYEKSGALSGLQRVREMTLNDGHTFVRPDQIQDEFKSILGLMIDVYADFNINDYTFRLSYRDPANTEKYFDDDEMWNKAQAMLKGAMDDLGLDYVEAEGEAAFYGPKLDVQTKTAMGNEETLSTIQLDFMLPERFDLHYVGEDGEMHRPVMIHRGLVSTMERFTAYLTEIYKGAFPTWLAPTQAVIIPVKNDLHYDYAKNIKDEMIKRGLRVRIDDRNEKMGYKIREAQTSKIPYTLVVGDQELAQATVSVRKYGEENAVEEASDMFINAIVAEVGNYSRDGKQHTKKINL.

Residues Met1 to Thr63 form the TGS domain. The tract at residues Asp243 to Pro541 is catalytic. Positions 337, 388, and 518 each coordinate Zn(2+).

Belongs to the class-II aminoacyl-tRNA synthetase family. In terms of assembly, homodimer. Zn(2+) serves as cofactor.

It is found in the cytoplasm. It catalyses the reaction tRNA(Thr) + L-threonine + ATP = L-threonyl-tRNA(Thr) + AMP + diphosphate + H(+). Catalyzes the attachment of threonine to tRNA(Thr) in a two-step reaction: L-threonine is first activated by ATP to form Thr-AMP and then transferred to the acceptor end of tRNA(Thr). Also edits incorrectly charged L-seryl-tRNA(Thr). This is Threonine--tRNA ligase from Latilactobacillus sakei subsp. sakei (strain 23K) (Lactobacillus sakei subsp. sakei).